The following is a 261-amino-acid chain: Large ribosomal subunit protein uL10m (261 aa).

The transit peptide at 1-28 directs the protein to the mitochondrion; sequence MAAAVAGMLRGGLLPQAGRLPTLQTVRY. Residues 242–261 form a disordered region; the sequence is EKDSVMSANGKPDPDTVPDS.

The protein belongs to the universal ribosomal protein uL10 family. Component of the mitochondrial large ribosomal subunit (mt-LSU). Mature mammalian 55S mitochondrial ribosomes consist of a small (28S) and a large (39S) subunit. The 28S small subunit contains a 12S ribosomal RNA (12S mt-rRNA) and 30 different proteins. The 39S large subunit contains a 16S rRNA (16S mt-rRNA), a copy of mitochondrial valine transfer RNA (mt-tRNA(Val)), which plays an integral structural role, and 52 different proteins. uL10m contributes a single cysteine residue to a zinc-binding site with mL66.

The protein localises to the mitochondrion. The protein is Large ribosomal subunit protein uL10m (MRPL10) of Homo sapiens (Human).